Consider the following 112-residue polypeptide: Peptidyl-tRNA hydrolase (112 aa).

Belongs to the PTH2 family.

The protein localises to the cytoplasm. It catalyses the reaction an N-acyl-L-alpha-aminoacyl-tRNA + H2O = an N-acyl-L-amino acid + a tRNA + H(+). In terms of biological role, the natural substrate for this enzyme may be peptidyl-tRNAs which drop off the ribosome during protein synthesis. This is Peptidyl-tRNA hydrolase from Methanothermobacter thermautotrophicus (strain ATCC 29096 / DSM 1053 / JCM 10044 / NBRC 100330 / Delta H) (Methanobacterium thermoautotrophicum).